The following is a 182-amino-acid chain: Large ribosomal subunit protein uL5 (182 aa).

Belongs to the universal ribosomal protein uL5 family. In terms of assembly, part of the 50S ribosomal subunit; part of the 5S rRNA/L5/L18/L25 subcomplex. Contacts the 5S rRNA and the P site tRNA. Forms a bridge to the 30S subunit in the 70S ribosome.

This is one of the proteins that bind and probably mediate the attachment of the 5S RNA into the large ribosomal subunit, where it forms part of the central protuberance. In the 70S ribosome it contacts protein S13 of the 30S subunit (bridge B1b), connecting the 2 subunits; this bridge is implicated in subunit movement. Contacts the P site tRNA; the 5S rRNA and some of its associated proteins might help stabilize positioning of ribosome-bound tRNAs. This is Large ribosomal subunit protein uL5 from Coxiella burnetii (strain CbuK_Q154) (Coxiella burnetii (strain Q154)).